Reading from the N-terminus, the 342-residue chain is L-threonine 3-dehydrogenase (342 aa).

A Zn(2+)-binding site is contributed by Cys-38. Catalysis depends on charge relay system residues Thr-40 and His-43. Zn(2+)-binding residues include His-63, Glu-64, Cys-93, Cys-96, Cys-99, and Cys-107. Residues Ile-175, Asp-195, Arg-200, 262–264, and 286–287 each bind NAD(+); these read LGI and IY.

It belongs to the zinc-containing alcohol dehydrogenase family. As to quaternary structure, homotetramer. It depends on Zn(2+) as a cofactor.

Its subcellular location is the cytoplasm. It carries out the reaction L-threonine + NAD(+) = (2S)-2-amino-3-oxobutanoate + NADH + H(+). Its pathway is amino-acid degradation; L-threonine degradation via oxydo-reductase pathway; glycine from L-threonine: step 1/2. Its function is as follows. Catalyzes the NAD(+)-dependent oxidation of L-threonine to 2-amino-3-ketobutyrate. This is L-threonine 3-dehydrogenase from Paraburkholderia phymatum (strain DSM 17167 / CIP 108236 / LMG 21445 / STM815) (Burkholderia phymatum).